We begin with the raw amino-acid sequence, 274 residues long: 4-hydroxy-tetrahydrodipicolinate reductase (274 aa).

7-12 contributes to the NAD(+) binding site; it reads GVTGRM. Position 40 (arginine 40) interacts with NADP(+). Residues 103–105 and 127–130 each bind NAD(+); these read GTT and SANF. Catalysis depends on histidine 160, which acts as the Proton donor/acceptor. Histidine 161 is a binding site for (S)-2,3,4,5-tetrahydrodipicolinate. Residue lysine 164 is the Proton donor of the active site. 170–171 contacts (S)-2,3,4,5-tetrahydrodipicolinate; it reads GT.

It belongs to the DapB family. Homotetramer.

It localises to the cytoplasm. It carries out the reaction (S)-2,3,4,5-tetrahydrodipicolinate + NAD(+) + H2O = (2S,4S)-4-hydroxy-2,3,4,5-tetrahydrodipicolinate + NADH + H(+). The enzyme catalyses (S)-2,3,4,5-tetrahydrodipicolinate + NADP(+) + H2O = (2S,4S)-4-hydroxy-2,3,4,5-tetrahydrodipicolinate + NADPH + H(+). The protein operates within amino-acid biosynthesis; L-lysine biosynthesis via DAP pathway; (S)-tetrahydrodipicolinate from L-aspartate: step 4/4. Catalyzes the conversion of 4-hydroxy-tetrahydrodipicolinate (HTPA) to tetrahydrodipicolinate. The polypeptide is 4-hydroxy-tetrahydrodipicolinate reductase (Blochmanniella floridana).